The chain runs to 471 residues: Argininosuccinate lyase (471 aa).

The protein belongs to the lyase 1 family. Argininosuccinate lyase subfamily.

Its subcellular location is the cytoplasm. It carries out the reaction 2-(N(omega)-L-arginino)succinate = fumarate + L-arginine. Its pathway is amino-acid biosynthesis; L-arginine biosynthesis; L-arginine from L-ornithine and carbamoyl phosphate: step 3/3. The polypeptide is Argininosuccinate lyase (Ehrlichia canis (strain Jake)).